A 297-amino-acid chain; its full sequence is ER membrane protein complex subunit 2-B (297 aa).

3 TPR repeats span residues 87–120 (HRVK…DPTN), 155–188 (QEAW…NPHN), and 192–225 (YQQF…NNHS).

Belongs to the EMC2 family. Component of the ER membrane protein complex (EMC).

The protein resides in the endoplasmic reticulum membrane. Functionally, part of the endoplasmic reticulum membrane protein complex (EMC) that enables the energy-independent insertion into endoplasmic reticulum membranes of newly synthesized membrane proteins. Preferentially accommodates proteins with transmembrane domains that are weakly hydrophobic or contain destabilizing features such as charged and aromatic residues. Involved in the cotranslational insertion of multi-pass membrane proteins in which stop-transfer membrane-anchor sequences become ER membrane spanning helices. It is also required for the post-translational insertion of tail-anchored/TA proteins in endoplasmic reticulum membranes. By mediating the proper cotranslational insertion of N-terminal transmembrane domains in an N-exo topology, with translocated N-terminus in the lumen of the ER, controls the topology of multi-pass membrane proteins. By regulating the insertion of various proteins in membranes, it is indirectly involved in many cellular processes. The chain is ER membrane protein complex subunit 2-B (emc2-b) from Xenopus laevis (African clawed frog).